A 71-amino-acid chain; its full sequence is Beta-defensin 131A (71 aa).

The first 22 residues, 1-22 (MRVLFFVFGVLSLMFTVPPARS), serve as a signal peptide directing secretion. 3 disulfides stabilise this stretch: Cys-29-Cys-57, Cys-37-Cys-51, and Cys-41-Cys-58.

This sequence belongs to the beta-defensin family.

The protein resides in the secreted. In terms of biological role, has antibacterial activity. Upon stimulation with lipoteichoic acid, promotes cytokines and chemokines production and secretion. This is Beta-defensin 131A from Pan troglodytes (Chimpanzee).